Consider the following 85-residue polypeptide: uncharacterized protein (85 aa).

A helical transmembrane segment spans residues 39-59 (FILFEISMYIIFIVTFCYKII).

It is found in the host membrane. This is an uncharacterized protein from Gallid herpesvirus 2 (strain Chicken/Md5/ATCC VR-987) (GaHV-2).